Reading from the N-terminus, the 158-residue chain is Transcriptional repressor NrdR (158 aa).

The segment at 3-34 (CPYCGFEESKVVDSRSTEDHKAIRRRRECLKC) is a zinc-finger region. Residues 49-139 (VLVIKRDSNR…VYRQFKDINT (91 aa)) form the ATP-cone domain.

Belongs to the NrdR family. It depends on Zn(2+) as a cofactor.

Functionally, negatively regulates transcription of bacterial ribonucleotide reductase nrd genes and operons by binding to NrdR-boxes. In Clostridium novyi (strain NT), this protein is Transcriptional repressor NrdR.